Reading from the N-terminus, the 283-residue chain is DNA repair protein RecO (283 aa).

Residues 254–264 (SSPASVGSSAT) show a composition bias toward polar residues. A disordered region spans residues 254–283 (SSPASVGSSATRYFAQGDTDENDRDPPGAR).

It belongs to the RecO family.

In terms of biological role, involved in DNA repair and RecF pathway recombination. The protein is DNA repair protein RecO of Roseiflexus sp. (strain RS-1).